The primary structure comprises 437 residues: Chromosomal replication initiator protein DnaA (437 aa).

The tract at residues 1–69 (MLGDTTLKQL…AHLFELSTGI (69 aa)) is domain I, interacts with DnaA modulators. Residues 69–100 (IRPKIEIRLGSLKKDVKSSSPKAGVSKGQKST) form a domain II region. The segment at 101-315 (ILNPSFTFDS…GIIIKLNAYA (215 aa)) is domain III, AAA+ region. ATP is bound by residues Gly-145, Gly-147, Lys-148, and Thr-149. The domain IV, binds dsDNA stretch occupies residues 316–437 (NLMNQEITLQ…ELKNKIKSRN (122 aa)).

This sequence belongs to the DnaA family. Oligomerizes as a right-handed, spiral filament on DNA at oriC.

The protein localises to the cytoplasm. Functionally, plays an essential role in the initiation and regulation of chromosomal replication. ATP-DnaA binds to the origin of replication (oriC) to initiate formation of the DNA replication initiation complex once per cell cycle. Binds the DnaA box (a 9 base pair repeat at the origin) and separates the double-stranded (ds)DNA. Forms a right-handed helical filament on oriC DNA; dsDNA binds to the exterior of the filament while single-stranded (ss)DNA is stabiized in the filament's interior. The ATP-DnaA-oriC complex binds and stabilizes one strand of the AT-rich DNA unwinding element (DUE), permitting loading of DNA polymerase. After initiation quickly degrades to an ADP-DnaA complex that is not apt for DNA replication. Binds acidic phospholipids. The sequence is that of Chromosomal replication initiator protein DnaA from Wolinella succinogenes (strain ATCC 29543 / DSM 1740 / CCUG 13145 / JCM 31913 / LMG 7466 / NCTC 11488 / FDC 602W) (Vibrio succinogenes).